The sequence spans 548 residues: Organic cation transporter protein (548 aa).

The Cytoplasmic segment spans residues 1 to 22 (MGYDDVITHLGEFGPYQKRIYY). A helical membrane pass occupies residues 23 to 43 (LLCLPAIVCAFHKLAGVFLLA). Over 44–127 (KPDFRCALPY…TEWNLVCSRS (84 aa)) the chain is Extracellular. Residues Asn55, Asn67, Asn89, and Asn97 are each glycosylated (N-linked (GlcNAc...) asparagine). The helical transmembrane segment at 128 to 148 (LLSATSDSLFMLGVLLGSLIF) threads the bilayer. Residues 149–158 (GQMSDKLGRK) lie on the Cytoplasmic side of the membrane. A helical membrane pass occupies residues 159-179 (PTFFASLVLQLIFGVLAAVAP). Over 180–189 (EYFSYTISRM) the chain is Extracellular. A helical transmembrane segment spans residues 190 to 210 (IVGATTSGVFLVAYVIALEMV). Residues 211-219 (GSSYRLFAG) lie on the Cytoplasmic side of the membrane. The chain crosses the membrane as a helical span at residues 220–240 (VAMQMFFSVGFMLTAGFAYFI). Topologically, residues 241–244 (HDWR) are extracellular. Residues 245-265 (WLQIAITLPGLLFLCYYWIIP) form a helical membrane-spanning segment. The Cytoplasmic segment spans residues 266–337 (ESARWLLMKG…LLRYPNLRRK (72 aa)). A helical membrane pass occupies residues 338–358 (TLLIFFDWFVNSGVYYGLSWN). At 359–366 (TNNLGGNQ) the chain is on the extracellular side. A helical membrane pass occupies residues 367–387 (LVNFMISGAVEIPGYTLLLFT). Over 388–395 (LNRWGRRS) the chain is Cytoplasmic. Residues 396-416 (ILCGTMMVAGISLLATIFVPS) traverse the membrane as a helical segment. Residues 417 to 419 (DMN) lie on the Extracellular side of the membrane. The chain crosses the membrane as a helical span at residues 420–440 (WLIVACAMIGKLAITSSYGTI). The Cytoplasmic segment spans residues 441–453 (YIFSAEQFPTVVR). Residues 454–474 (NVGLGASSMVARVGGILAPYL) traverse the membrane as a helical segment. The Extracellular portion of the chain corresponds to 475–482 (KLLGEIWR). A helical membrane pass occupies residues 483 to 503 (PLPLIICGALSLTAGLLSLLL). The Cytoplasmic segment spans residues 504–548 (PETLNKPMPETIEDGENFGKKPAPQETAEEGGTQELSGMLNGKSG). The interval 512–548 (PETIEDGENFGKKPAPQETAEEGGTQELSGMLNGKSG) is disordered.

The protein belongs to the major facilitator (TC 2.A.1) superfamily. Organic cation transporter (TC 2.A.1.19) family. In terms of tissue distribution, expressed in embryos and adults at low level. Expressed at higher level in third instar larvae.

Its subcellular location is the membrane. Its function is as follows. Probably transports organic cations. The chain is Organic cation transporter protein (Orct) from Drosophila melanogaster (Fruit fly).